Reading from the N-terminus, the 366-residue chain is Probable UDP-arabinopyranose mutase 2 (366 aa).

The short motif at Asp104 to Asp106 is the DXD motif element. A glycan (N-linked (Glc...) arginine) is linked at Arg152.

Belongs to the RGP family. In terms of assembly, homopentamer or homohexamer. The cofactor is Mn(2+). Mg(2+) serves as cofactor. In terms of processing, reversibly glycosylated by UDP-glucose, UDP-xylose and UDP-galactose, but not UDP-mannose. In terms of tissue distribution, expressed in all tissues tested, including root, tuber, leaf, petiole, shoot, stolon and stem.

Its subcellular location is the secreted. The protein resides in the cell wall. It is found in the cell junction. The protein localises to the plasmodesma. It localises to the golgi apparatus. It carries out the reaction UDP-beta-L-arabinofuranose = UDP-beta-L-arabinopyranose. Probable UDP-L-arabinose mutase involved in the biosynthesis of cell wall non-cellulosic polysaccharides. Was initially shown to possess an autoglycosylating activity which is dependent on the presence of UDP-glucose and manganese. In Solanum tuberosum (Potato), this protein is Probable UDP-arabinopyranose mutase 2.